Consider the following 460-residue polypeptide: Allantoinase (460 aa).

Zn(2+) is bound by residues histidine 70, histidine 72, lysine 157, histidine 193, histidine 250, and aspartate 323. Lysine 157 carries the N6-carboxylysine modification.

The protein belongs to the metallo-dependent hydrolases superfamily. Allantoinase family. In terms of assembly, homotetramer. It depends on Zn(2+) as a cofactor. Post-translationally, carboxylation allows a single lysine to coordinate two zinc ions.

It catalyses the reaction (S)-allantoin + H2O = allantoate + H(+). It participates in nitrogen metabolism; (S)-allantoin degradation; allantoate from (S)-allantoin: step 1/1. Functionally, catalyzes the conversion of allantoin (5-ureidohydantoin) to allantoic acid by hydrolytic cleavage of the five-member hydantoin ring. Involved in the utilization of purines as secondary nitrogen sources, when primary sources are limiting. The polypeptide is Allantoinase (DAL1) (Saccharomyces cerevisiae (strain ATCC 204508 / S288c) (Baker's yeast)).